The primary structure comprises 173 residues: Photosystem I assembly protein Ycf3 (173 aa).

TPR repeat units lie at residues 35–68, 72–105, and 120–153; these read AFAY…EDDP, SYIL…NPRM, and GEKA…APNN.

The protein belongs to the Ycf3 family.

Its subcellular location is the cellular thylakoid membrane. Essential for the assembly of the photosystem I (PSI) complex. May act as a chaperone-like factor to guide the assembly of the PSI subunits. This is Photosystem I assembly protein Ycf3 from Picosynechococcus sp. (strain ATCC 27264 / PCC 7002 / PR-6) (Agmenellum quadruplicatum).